Here is a 271-residue protein sequence, read N- to C-terminus: Shikimate dehydrogenase (NADP(+)) (271 aa).

Residues 14-16 and Thr-61 contribute to the shikimate site; that span reads SLS. Lys-65 serves as the catalytic Proton acceptor. Asn-86 and Asp-101 together coordinate shikimate. Residues 125 to 129 and Ile-212 each bind NADP(+); that span reads GAGGA. Residue Tyr-214 coordinates shikimate. Residue Gly-235 coordinates NADP(+).

This sequence belongs to the shikimate dehydrogenase family. Homodimer.

It carries out the reaction shikimate + NADP(+) = 3-dehydroshikimate + NADPH + H(+). Its pathway is metabolic intermediate biosynthesis; chorismate biosynthesis; chorismate from D-erythrose 4-phosphate and phosphoenolpyruvate: step 4/7. In terms of biological role, involved in the biosynthesis of the chorismate, which leads to the biosynthesis of aromatic amino acids. Catalyzes the reversible NADPH linked reduction of 3-dehydroshikimate (DHSA) to yield shikimate (SA). The protein is Shikimate dehydrogenase (NADP(+)) of Clostridium perfringens (strain 13 / Type A).